Reading from the N-terminus, the 178-residue chain is Cytochrome b6-f complex iron-sulfur subunit (178 aa).

Residues 20-42 traverse the membrane as a helical segment; that stretch reads LLTFGTVTGVALGALYPVAQYFT. Residues 71–161 form the Rieske domain; that stretch reads THPVGDRSLV…VSIEDDQVLV (91 aa). Residues cysteine 107, histidine 109, cysteine 125, and histidine 128 each contribute to the [2Fe-2S] cluster site. A disulfide bridge connects residues cysteine 112 and cysteine 127.

This sequence belongs to the Rieske iron-sulfur protein family. As to quaternary structure, the 4 large subunits of the cytochrome b6-f complex are cytochrome b6, subunit IV (17 kDa polypeptide, PetD), cytochrome f and the Rieske protein, while the 4 small subunits are PetG, PetL, PetM and PetN. The complex functions as a dimer. [2Fe-2S] cluster is required as a cofactor.

Its subcellular location is the cellular thylakoid membrane. The enzyme catalyses 2 oxidized [plastocyanin] + a plastoquinol + 2 H(+)(in) = 2 reduced [plastocyanin] + a plastoquinone + 4 H(+)(out). In terms of biological role, component of the cytochrome b6-f complex, which mediates electron transfer between photosystem II (PSII) and photosystem I (PSI), cyclic electron flow around PSI, and state transitions. In Prochlorococcus marinus (strain NATL1A), this protein is Cytochrome b6-f complex iron-sulfur subunit.